Consider the following 422-residue polypeptide: UDP-N-acetylglucosamine 1-carboxyvinyltransferase (422 aa).

A phosphoenolpyruvate-binding site is contributed by 22 to 23 (KN). R93 is a binding site for UDP-N-acetyl-alpha-D-glucosamine. The active-site Proton donor is the C117. C117 is modified (2-(S-cysteinyl)pyruvic acid O-phosphothioketal). UDP-N-acetyl-alpha-D-glucosamine contacts are provided by residues 122-126 (RPVDQ), D305, and I327.

The protein belongs to the EPSP synthase family. MurA subfamily.

The protein localises to the cytoplasm. It carries out the reaction phosphoenolpyruvate + UDP-N-acetyl-alpha-D-glucosamine = UDP-N-acetyl-3-O-(1-carboxyvinyl)-alpha-D-glucosamine + phosphate. Its pathway is cell wall biogenesis; peptidoglycan biosynthesis. Cell wall formation. Adds enolpyruvyl to UDP-N-acetylglucosamine. The sequence is that of UDP-N-acetylglucosamine 1-carboxyvinyltransferase from Bordetella bronchiseptica (strain ATCC BAA-588 / NCTC 13252 / RB50) (Alcaligenes bronchisepticus).